Consider the following 208-residue polypeptide: Small ribosomal subunit protein uS4 (208 aa).

The region spanning 98–160 (QRLDNVVYRM…SKNNSQIVRA (63 aa)) is the S4 RNA-binding domain.

It belongs to the universal ribosomal protein uS4 family. As to quaternary structure, part of the 30S ribosomal subunit. Contacts protein S5. The interaction surface between S4 and S5 is involved in control of translational fidelity.

One of the primary rRNA binding proteins, it binds directly to 16S rRNA where it nucleates assembly of the body of the 30S subunit. Functionally, with S5 and S12 plays an important role in translational accuracy. The polypeptide is Small ribosomal subunit protein uS4 (Sulfurimonas denitrificans (strain ATCC 33889 / DSM 1251) (Thiomicrospira denitrificans (strain ATCC 33889 / DSM 1251))).